The following is a 287-amino-acid chain: Acetylglutamate kinase (287 aa).

Residues G70 to G71, R92, and N184 contribute to the substrate site.

This sequence belongs to the acetylglutamate kinase family. ArgB subfamily.

Its subcellular location is the cytoplasm. It catalyses the reaction N-acetyl-L-glutamate + ATP = N-acetyl-L-glutamyl 5-phosphate + ADP. It functions in the pathway amino-acid biosynthesis; L-arginine biosynthesis; N(2)-acetyl-L-ornithine from L-glutamate: step 2/4. Its function is as follows. Catalyzes the ATP-dependent phosphorylation of N-acetyl-L-glutamate. This chain is Acetylglutamate kinase, found in Dinoroseobacter shibae (strain DSM 16493 / NCIMB 14021 / DFL 12).